Reading from the N-terminus, the 462-residue chain is Argininosuccinate lyase (462 aa).

Belongs to the lyase 1 family. Argininosuccinate lyase subfamily.

It is found in the cytoplasm. It carries out the reaction 2-(N(omega)-L-arginino)succinate = fumarate + L-arginine. Its pathway is amino-acid biosynthesis; L-arginine biosynthesis; L-arginine from L-ornithine and carbamoyl phosphate: step 3/3. The sequence is that of Argininosuccinate lyase from Methylobacterium sp. (strain 4-46).